We begin with the raw amino-acid sequence, 387 residues long: Phosphoglycerate kinase (387 aa).

Substrate is bound by residues 21-23 (DLN), Arg36, 59-62 (HLGR), Arg113, and Arg146. Residues Lys197, Glu314, and 340–343 (GGDT) contribute to the ATP site.

The protein belongs to the phosphoglycerate kinase family. In terms of assembly, monomer.

The protein localises to the cytoplasm. It carries out the reaction (2R)-3-phosphoglycerate + ATP = (2R)-3-phospho-glyceroyl phosphate + ADP. Its pathway is carbohydrate degradation; glycolysis; pyruvate from D-glyceraldehyde 3-phosphate: step 2/5. This Tolumonas auensis (strain DSM 9187 / NBRC 110442 / TA 4) protein is Phosphoglycerate kinase.